The sequence spans 549 residues: DDB1- and CUL4-associated factor 11 (549 aa).

Over residues 1–24 (MGSRNSSSAGSGSLEPSEGLSRRG) the composition is skewed to low complexity. The tract at residues 1 to 40 (MGSRNSSSAGSGSLEPSEGLSRRGTGLRRSEEEEEEDEDV) is disordered. Phosphoserine occurs at positions 73 and 75. 7 WD repeats span residues 170–210 (TYSQ…HKFK), 216–258 (DVGW…TALD), 263–302 (ERRFAVFSIAVSSDGREVLGGANDGCLYVFDREQNRRTLQ), 305–345 (SHED…EDDP), 353–392 (GHQDGITFIDSKGDARYLISNSKDQTIKLWDIRRFSSREG), 435–480 (GVLH…KKLT), and 481–520 (NHKACVRDVSWHPFEEKIVSSSWDGNLRLWQYRQAEYFQD).

In terms of assembly, interacts with DDB1 and CUL4A.

Its pathway is protein modification; protein ubiquitination. May function as a substrate receptor for CUL4-DDB1 E3 ubiquitin-protein ligase complex. This is DDB1- and CUL4-associated factor 11 (Dcaf11) from Mus musculus (Mouse).